A 322-amino-acid chain; its full sequence is uncharacterized protein (322 aa).

This is an uncharacterized protein from Aquifex aeolicus (strain VF5).